The sequence spans 370 residues: Cobalt-precorrin-5B C(1)-methyltransferase (370 aa).

This sequence belongs to the CbiD family.

The catalysed reaction is Co-precorrin-5B + S-adenosyl-L-methionine = Co-precorrin-6A + S-adenosyl-L-homocysteine. Its pathway is cofactor biosynthesis; adenosylcobalamin biosynthesis; cob(II)yrinate a,c-diamide from sirohydrochlorin (anaerobic route): step 6/10. In terms of biological role, catalyzes the methylation of C-1 in cobalt-precorrin-5B to form cobalt-precorrin-6A. This chain is Cobalt-precorrin-5B C(1)-methyltransferase, found in Prochlorococcus marinus (strain MIT 9312).